The chain runs to 93 residues: Small ribosomal subunit protein uS19 (93 aa).

Belongs to the universal ribosomal protein uS19 family.

Functionally, protein S19 forms a complex with S13 that binds strongly to the 16S ribosomal RNA. This is Small ribosomal subunit protein uS19 from Frankia alni (strain DSM 45986 / CECT 9034 / ACN14a).